The sequence spans 213 residues: Protein-L-isoaspartate O-methyltransferase (213 aa).

Serine 61 is a catalytic residue.

Belongs to the methyltransferase superfamily. L-isoaspartyl/D-aspartyl protein methyltransferase family.

Its subcellular location is the cytoplasm. It catalyses the reaction [protein]-L-isoaspartate + S-adenosyl-L-methionine = [protein]-L-isoaspartate alpha-methyl ester + S-adenosyl-L-homocysteine. In terms of biological role, catalyzes the methyl esterification of L-isoaspartyl residues in peptides and proteins that result from spontaneous decomposition of normal L-aspartyl and L-asparaginyl residues. It plays a role in the repair and/or degradation of damaged proteins. The chain is Protein-L-isoaspartate O-methyltransferase from Petrotoga mobilis (strain DSM 10674 / SJ95).